A 1588-amino-acid chain; its full sequence is Pentafunctional AROM polypeptide (1588 aa).

The 3-dehydroquinate synthase stretch occupies residues 1–392; that stretch reads MVQLAKVPIL…YGDSAQFVSD (392 aa). NAD(+)-binding positions include 43–45, 78–81, 109–111, and D114; these read DTN, ETSK, and GGV. R125 provides a ligand contact to 7-phospho-2-dehydro-3-deoxy-D-arabino-heptonate. 134-135 contributes to the NAD(+) binding site; sequence TS. Positions 141 and 147 each coordinate 7-phospho-2-dehydro-3-deoxy-D-arabino-heptonate. Residue K156 coordinates NAD(+). N157 contacts 7-phospho-2-dehydro-3-deoxy-D-arabino-heptonate. NAD(+)-binding positions include 174–177 and N185; that span reads WLET. E189 contributes to the Zn(2+) binding site. Residues 189–192 and K258 each bind 7-phospho-2-dehydro-3-deoxy-D-arabino-heptonate; that span reads EVIK. E268 serves as the catalytic Proton acceptor; for 3-dehydroquinate synthase activity. 7-phospho-2-dehydro-3-deoxy-D-arabino-heptonate contacts are provided by residues 272–276 and H279; that span reads RNLLN. A Zn(2+)-binding site is contributed by H279. The active-site Proton acceptor; for 3-dehydroquinate synthase activity is the H283. Residues H295 and K364 each contribute to the 7-phospho-2-dehydro-3-deoxy-D-arabino-heptonate site. H295 is a Zn(2+) binding site. The interval 405 to 871 is EPSP synthase; the sequence is VYPFKDIPAD…WDVLHSELGA (467 aa). The For EPSP synthase activity role is filled by C853. The tract at residues 890 to 1080 is shikimate kinase; that stretch reads SVVIIGMRAA…IPSGRSAFVC (191 aa). 895–902 contributes to the ATP binding site; sequence GMRAAGKT. The 3-dehydroquinase stretch occupies residues 1081-1293; the sequence is LTFDDLTEQT…AAPGQLTVAQ (213 aa). The active-site Proton acceptor; for 3-dehydroquinate dehydratase activity is H1198. K1227 serves as the catalytic Schiff-base intermediate with substrate; for 3-dehydroquinate dehydratase activity. Positions 1306 to 1588 are shikimate dehydrogenase; the sequence is PKELFVVGKP…KAIFDAVTKE (283 aa).

The protein in the N-terminal section; belongs to the sugar phosphate cyclases superfamily. Dehydroquinate synthase family. In the 2nd section; belongs to the EPSP synthase family. This sequence in the 3rd section; belongs to the shikimate kinase family. It in the 4th section; belongs to the type-I 3-dehydroquinase family. The protein in the C-terminal section; belongs to the shikimate dehydrogenase family. Homodimer. The cofactor is Zn(2+).

Its subcellular location is the cytoplasm. The catalysed reaction is 7-phospho-2-dehydro-3-deoxy-D-arabino-heptonate = 3-dehydroquinate + phosphate. It catalyses the reaction 3-dehydroquinate = 3-dehydroshikimate + H2O. It carries out the reaction shikimate + NADP(+) = 3-dehydroshikimate + NADPH + H(+). The enzyme catalyses shikimate + ATP = 3-phosphoshikimate + ADP + H(+). The catalysed reaction is 3-phosphoshikimate + phosphoenolpyruvate = 5-O-(1-carboxyvinyl)-3-phosphoshikimate + phosphate. It functions in the pathway metabolic intermediate biosynthesis; chorismate biosynthesis; chorismate from D-erythrose 4-phosphate and phosphoenolpyruvate: step 2/7. The protein operates within metabolic intermediate biosynthesis; chorismate biosynthesis; chorismate from D-erythrose 4-phosphate and phosphoenolpyruvate: step 3/7. It participates in metabolic intermediate biosynthesis; chorismate biosynthesis; chorismate from D-erythrose 4-phosphate and phosphoenolpyruvate: step 4/7. Its pathway is metabolic intermediate biosynthesis; chorismate biosynthesis; chorismate from D-erythrose 4-phosphate and phosphoenolpyruvate: step 5/7. It functions in the pathway metabolic intermediate biosynthesis; chorismate biosynthesis; chorismate from D-erythrose 4-phosphate and phosphoenolpyruvate: step 6/7. Functionally, the AROM polypeptide catalyzes 5 consecutive enzymatic reactions in prechorismate polyaromatic amino acid biosynthesis. This Saccharomyces cerevisiae (strain RM11-1a) (Baker's yeast) protein is Pentafunctional AROM polypeptide.